The primary structure comprises 181 residues: MSIETLKERLPDYAKDLKLNLSSLANDITLSPQQLAGTFVASAIASRNADVTRAIVAEYESVLSPQALTAAKAAAAIMGLNNIYYRFVHMVEGDYAHMPARLRMNVIGRPGVEKLDFELWSLAVSAINGCGMCVESHEKVVREGGLSAEQVQTAVRVAATVHAVAATLDGAAALGDHPAAG.

Cys130 functions as the Proton donor in the catalytic mechanism. A disulfide bridge connects residues Cys130 and Cys133. Cys133 acts as the Cysteine sulfenic acid (-SOH) intermediate in catalysis.

Belongs to the AhpD family.

The catalysed reaction is N(6)-[(R)-dihydrolipoyl]-L-lysyl-[lipoyl-carrier protein] + a hydroperoxide = N(6)-[(R)-lipoyl]-L-lysyl-[lipoyl-carrier protein] + an alcohol + H2O. Functionally, antioxidant protein with alkyl hydroperoxidase activity. Required for the reduction of the AhpC active site cysteine residues and for the regeneration of the AhpC enzyme activity. The polypeptide is Alkyl hydroperoxide reductase AhpD (Gluconacetobacter diazotrophicus (strain ATCC 49037 / DSM 5601 / CCUG 37298 / CIP 103539 / LMG 7603 / PAl5)).